The primary structure comprises 434 residues: Asparagine--tRNA ligase (434 aa).

It belongs to the class-II aminoacyl-tRNA synthetase family.

It is found in the cytoplasm. It carries out the reaction tRNA(Asn) + L-asparagine + ATP = L-asparaginyl-tRNA(Asn) + AMP + diphosphate + H(+). This chain is Asparagine--tRNA ligase, found in Pyrococcus abyssi (strain GE5 / Orsay).